The primary structure comprises 247 residues: tRNA pseudouridine synthase A (247 aa).

Aspartate 52 (nucleophile) is an active-site residue. Tyrosine 110 serves as a coordination point for substrate.

This sequence belongs to the tRNA pseudouridine synthase TruA family. Homodimer.

It catalyses the reaction uridine(38/39/40) in tRNA = pseudouridine(38/39/40) in tRNA. Its function is as follows. Formation of pseudouridine at positions 38, 39 and 40 in the anticodon stem and loop of transfer RNAs. The sequence is that of tRNA pseudouridine synthase A from Hyphomonas neptunium (strain ATCC 15444).